The following is a 377-amino-acid chain: MATIGEFTLHATDGKARTGVLQTAHGPVRTPIFMPVGTVGSVKGVAPDDLDAIGAEIILGNTYHLYLRPGDELVARRGGLHEFNAWRKPILTDSGGFQVFSLSGLRRISEEGVEFRSHLDGSKHLFTPEKVVSIQRNLNSDIMMVLDECVPYGADKDYTARSLKMTTRWAQRCRDAYPAGSGGNLMFGITQGGFFKDLREESIGELTRIDFDGFALGGLSVGESKTEMMDILYHTAPMLPAHKPRYLMGVGTPLDIINGINAGIDMFDCVLPTRNARNGTLYTSAGKINIKRREFAEDDGPLDPNCSCYTCRTFSRAYLRHLFHAQEILSYRLNSIHNLTYFLDLVRGAREAIAQGTFAEYKSRYDAIYPQEAALCP.

Aspartate 93 acts as the Proton acceptor in catalysis. Residues 93–97, aspartate 147, glutamine 191, and glycine 218 contribute to the substrate site; that span reads DSGGF. The RNA binding stretch occupies residues 249-255; sequence GVGTPLD. Aspartate 268 functions as the Nucleophile in the catalytic mechanism. Positions 273-277 are RNA binding; important for wobble base 34 recognition; the sequence is TRNAR. Zn(2+) contacts are provided by cysteine 306, cysteine 308, cysteine 311, and histidine 337.

It belongs to the queuine tRNA-ribosyltransferase family. As to quaternary structure, homodimer. Within each dimer, one monomer is responsible for RNA recognition and catalysis, while the other monomer binds to the replacement base PreQ1. The cofactor is Zn(2+).

It catalyses the reaction 7-aminomethyl-7-carbaguanine + guanosine(34) in tRNA = 7-aminomethyl-7-carbaguanosine(34) in tRNA + guanine. It functions in the pathway tRNA modification; tRNA-queuosine biosynthesis. Catalyzes the base-exchange of a guanine (G) residue with the queuine precursor 7-aminomethyl-7-deazaguanine (PreQ1) at position 34 (anticodon wobble position) in tRNAs with GU(N) anticodons (tRNA-Asp, -Asn, -His and -Tyr). Catalysis occurs through a double-displacement mechanism. The nucleophile active site attacks the C1' of nucleotide 34 to detach the guanine base from the RNA, forming a covalent enzyme-RNA intermediate. The proton acceptor active site deprotonates the incoming PreQ1, allowing a nucleophilic attack on the C1' of the ribose to form the product. After dissociation, two additional enzymatic reactions on the tRNA convert PreQ1 to queuine (Q), resulting in the hypermodified nucleoside queuosine (7-(((4,5-cis-dihydroxy-2-cyclopenten-1-yl)amino)methyl)-7-deazaguanosine). This chain is Queuine tRNA-ribosyltransferase, found in Oleidesulfovibrio alaskensis (strain ATCC BAA-1058 / DSM 17464 / G20) (Desulfovibrio alaskensis).